The sequence spans 537 residues: Glucose-6-phosphate isomerase (537 aa).

Glu-355 (proton donor) is an active-site residue. Active-site residues include His-386 and Lys-501.

This sequence belongs to the GPI family.

It localises to the cytoplasm. It carries out the reaction alpha-D-glucose 6-phosphate = beta-D-fructose 6-phosphate. The protein operates within carbohydrate biosynthesis; gluconeogenesis. Its pathway is carbohydrate degradation; glycolysis; D-glyceraldehyde 3-phosphate and glycerone phosphate from D-glucose: step 2/4. Its function is as follows. Catalyzes the reversible isomerization of glucose-6-phosphate to fructose-6-phosphate. This is Glucose-6-phosphate isomerase from Protochlamydia amoebophila (strain UWE25).